Reading from the N-terminus, the 263-residue chain is Microtubule-associated protein RP/EB family member 1 (263 aa).

Residues 14-116 (NLSRHDMLAW…FVQWFKKFFD (103 aa)) form the Calponin-homology (CH) domain. Residues 150-182 (KPLGTGSAGPQRPIVAQRTPATPKGGTGMVKKA) are disordered. In terms of domain architecture, EB1 C-terminal spans 180–250 (KKAAGDDESA…LYATDEGFVI (71 aa)).

This sequence belongs to the MAPRE family.

Its subcellular location is the cytoplasm. It localises to the cytoskeleton. It is found in the microtubule organizing center. The protein localises to the centrosome. The protein resides in the golgi apparatus. Its subcellular location is the spindle. It localises to the spindle pole. Functionally, plus-end tracking protein (+TIP) that binds to the plus-end of microtubules and regulates the dynamics of the microtubule cytoskeleton. Promotes cytoplasmic microtubule nucleation and elongation. Involved in mitotic spindle positioning by stabilizing microtubules and promoting dynamic connection between astral microtubules and the cortex during mitotic chromosome segregation. This chain is Microtubule-associated protein RP/EB family member 1 (MAPRE1), found in Coturnix japonica (Japanese quail).